The primary structure comprises 140 residues: Large ribosomal subunit protein uL14 (140 aa).

It belongs to the universal ribosomal protein uL14 family.

The chain is Large ribosomal subunit protein uL14 (RPL23) from Brugia malayi (Filarial nematode worm).